Here is a 341-residue protein sequence, read N- to C-terminus: HTH-type sugar sensing transcriptional regulator TrmBL1 (341 aa).

The H-T-H motif DNA-binding region spans 32–53; sequence SKATDVTKESGIPHTRIYDVLS.

It belongs to the transcriptional regulator TrmB family. Homotetramer. Forms homooctamers in the presence of maltotriose or maltose.

With respect to regulation, repressor activity is regulated by binding of different sugars to TrmBL1. Binding of maltose and maltotriose results in derepression of the target genes. However, high sugar concentration results in formation of octamers with high affinity for DNA, which may prevent transcription of target genes. Its function is as follows. Global transcriptional repressor of the maltodextrin transport gene cluster (mdxE operon) and most likely of all genes encoding glycolytic enzymes. Acts by binding to the conserved TGM (Thermococcales-Glycolytic-Motif) sequences in their promoter region. Can also interact with non-TGM sequences. In Pyrococcus furiosus (strain ATCC 43587 / DSM 3638 / JCM 8422 / Vc1), this protein is HTH-type sugar sensing transcriptional regulator TrmBL1 (trmBL1).